Reading from the N-terminus, the 440-residue chain is Proline--tRNA ligase (440 aa).

The protein belongs to the class-II aminoacyl-tRNA synthetase family. ProS type 2 subfamily. In terms of assembly, homodimer.

It is found in the cytoplasm. The catalysed reaction is tRNA(Pro) + L-proline + ATP = L-prolyl-tRNA(Pro) + AMP + diphosphate. Catalyzes the attachment of proline to tRNA(Pro) in a two-step reaction: proline is first activated by ATP to form Pro-AMP and then transferred to the acceptor end of tRNA(Pro). In Rhizobium etli (strain ATCC 51251 / DSM 11541 / JCM 21823 / NBRC 15573 / CFN 42), this protein is Proline--tRNA ligase.